Consider the following 212-residue polypeptide: Redox-sensing transcriptional repressor Rex (212 aa).

The H-T-H motif DNA-binding region spans K17 to F56. G91–G96 contributes to the NAD(+) binding site.

The protein belongs to the transcriptional regulatory Rex family. In terms of assembly, homodimer.

It localises to the cytoplasm. Functionally, modulates transcription in response to changes in cellular NADH/NAD(+) redox state. The sequence is that of Redox-sensing transcriptional repressor Rex from Clostridium perfringens (strain ATCC 13124 / DSM 756 / JCM 1290 / NCIMB 6125 / NCTC 8237 / Type A).